We begin with the raw amino-acid sequence, 931 residues long: Neuropilin-2 (931 aa).

Positions 1–20 (MDMFPLTWVFLALYFSGHEV) are cleaved as a signal peptide. Residues 21–864 (RSQQDPPCGG…EKSWLYTLDP (844 aa)) lie on the Extracellular side of the membrane. 3 disulfides stabilise this stretch: Cys-28–Cys-55, Cys-83–Cys-105, and Cys-149–Cys-175. CUB domains follow at residues 28–142 (CGGR…YEIF) and 149–267 (CSKN…YYLI). Asn-152 and Asn-157 each carry an N-linked (GlcNAc...) asparagine glycan. The Ca(2+) site is built by Glu-197, Asp-211, and Asp-252. Residues Cys-208 and Cys-230 are joined by a disulfide bond. Intrachain disulfides connect Cys-277-Cys-427 and Cys-434-Cys-592. F5/8 type C domains lie at 277–427 (CNVP…LFGC) and 434–592 (CSNM…VLGC). The segment covering 298 to 310 (TFSDGRWTPQQSR) has biased composition (polar residues). Residues 298 to 317 (TFSDGRWTPQQSRLHGDDNG) form a disordered region. The segment at 601 to 621 (VETLGPTVKSEETTTPYPMDE) is disordered. N-linked (GlcNAc...) asparagine glycosylation occurs at Asn-629. An MAM domain is found at 642 to 802 (SGFNCNFDFP…TDVPLENCME (161 aa)). Residues 819-854 (THGGEGYEDEIDDEYEGDWSNSSSSTSGAGDPSSGK) are disordered. The span at 824–835 (GYEDEIDDEYEG) shows a compositional bias: acidic residues. A compositionally biased stretch (low complexity) spans 836-851 (DWSNSSSSTSGAGDPS). N-linked (GlcNAc...) asparagine glycosylation is present at Asn-839. A helical transmembrane segment spans residues 865–889 (ILITIIAMSSLGVLLGATCAGLLLY). Topologically, residues 890–931 (CTCSYSGLSSRSCTTLENYNFELYDGLKHKVKINHQKCCSEA) are cytoplasmic.

Belongs to the neuropilin family. In terms of assembly, heterodimer with NRP1. Binds PLXNB1. In terms of tissue distribution, expressed in developing CNS, PNS and in some nonneural tissues including limb buds, developing bones, muscles, intestinal epithelium, kidney, lung and submandibular gland.

Its subcellular location is the membrane. Functionally, high affinity receptor for semaphorins 3C, 3F, VEGF-165 and VEGF-145 isoforms of VEGF, and the PLGF-2 isoform of PGF. This Mus musculus (Mouse) protein is Neuropilin-2 (Nrp2).